Consider the following 277-residue polypeptide: Inhibition of morphological differentiation protein (277 aa).

Asp-18, Asp-20, and Asp-192 together coordinate Mg(2+).

This sequence belongs to the HAD-like hydrolase superfamily. SerB family.

In Streptomyces azureus, this protein is Inhibition of morphological differentiation protein.